The following is a 99-amino-acid chain: MANVNIKPLEDKILVQINEAETTTASGLVIPDSAKEKPQEATVIAVGPGRFDDKGNRIPLDIKEDDVVIFSRYGGTEIKFGGVEYLLLSARDILAIVEK.

It belongs to the GroES chaperonin family. As to quaternary structure, heptamer of 7 subunits arranged in a ring. Interacts with the chaperonin GroEL.

Its subcellular location is the cytoplasm. Functionally, together with the chaperonin GroEL, plays an essential role in assisting protein folding. The GroEL-GroES system forms a nano-cage that allows encapsulation of the non-native substrate proteins and provides a physical environment optimized to promote and accelerate protein folding. GroES binds to the apical surface of the GroEL ring, thereby capping the opening of the GroEL channel. The chain is Co-chaperonin GroES from Corynebacterium glutamicum (strain R).